The chain runs to 940 residues: Isoleucine--tRNA ligase (940 aa).

A 'HIGH' region motif is present at residues 58–68; that stretch reads PYANGAIHIGH. Glutamate 564 provides a ligand contact to L-isoleucyl-5'-AMP. The 'KMSKS' region signature appears at 605-609; sequence KMSKS. Lysine 608 is an ATP binding site. Residues cysteine 903, cysteine 906, cysteine 923, and cysteine 926 each contribute to the Zn(2+) site.

This sequence belongs to the class-I aminoacyl-tRNA synthetase family. IleS type 1 subfamily. As to quaternary structure, monomer. Zn(2+) is required as a cofactor.

It localises to the cytoplasm. The enzyme catalyses tRNA(Ile) + L-isoleucine + ATP = L-isoleucyl-tRNA(Ile) + AMP + diphosphate. Functionally, catalyzes the attachment of isoleucine to tRNA(Ile). As IleRS can inadvertently accommodate and process structurally similar amino acids such as valine, to avoid such errors it has two additional distinct tRNA(Ile)-dependent editing activities. One activity is designated as 'pretransfer' editing and involves the hydrolysis of activated Val-AMP. The other activity is designated 'posttransfer' editing and involves deacylation of mischarged Val-tRNA(Ile). This Nitrosococcus oceani (strain ATCC 19707 / BCRC 17464 / JCM 30415 / NCIMB 11848 / C-107) protein is Isoleucine--tRNA ligase.